We begin with the raw amino-acid sequence, 1393 residues long: DNA-directed RNA polymerase subunit beta' (1393 aa).

The Zn(2+) site is built by Cys70, Cys72, Cys85, and Cys88. 3 residues coordinate Mg(2+): Asp461, Asp463, and Asp465. Positions 804, 877, 884, and 887 each coordinate Zn(2+).

The protein belongs to the RNA polymerase beta' chain family. In terms of assembly, the RNAP catalytic core consists of 2 alpha, 1 beta, 1 beta' and 1 omega subunit. When a sigma factor is associated with the core the holoenzyme is formed, which can initiate transcription. It depends on Mg(2+) as a cofactor. Zn(2+) is required as a cofactor.

It catalyses the reaction RNA(n) + a ribonucleoside 5'-triphosphate = RNA(n+1) + diphosphate. In terms of biological role, DNA-dependent RNA polymerase catalyzes the transcription of DNA into RNA using the four ribonucleoside triphosphates as substrates. This Rhodospirillum rubrum (strain ATCC 11170 / ATH 1.1.1 / DSM 467 / LMG 4362 / NCIMB 8255 / S1) protein is DNA-directed RNA polymerase subunit beta'.